The chain runs to 152 residues: Ribosome maturation factor RimP (152 aa).

The protein belongs to the RimP family.

It is found in the cytoplasm. Functionally, required for maturation of 30S ribosomal subunits. This Brevibacillus brevis (strain 47 / JCM 6285 / NBRC 100599) protein is Ribosome maturation factor RimP.